We begin with the raw amino-acid sequence, 237 residues long: Probable GTP-binding protein EngB (237 aa).

An EngB-type G domain is found at 13–188 (TGYEIAFAGR…ASVMAGRLNY (176 aa)). GTP is bound by residues 21 to 28 (GRSNAGKS), 48 to 52 (GRTQM), 67 to 70 (DLPG), 134 to 137 (TKAD), and 167 to 169 (FSS). 2 residues coordinate Mg(2+): Ser28 and Thr50. Positions 207–220 (DDLNDELMDQDETS) are enriched in acidic residues. The interval 207 to 237 (DDLNDELMDQDETSEFNTENIDDHLDQEPKI) is disordered. The segment covering 227 to 237 (IDDHLDQEPKI) has biased composition (basic and acidic residues).

This sequence belongs to the TRAFAC class TrmE-Era-EngA-EngB-Septin-like GTPase superfamily. EngB GTPase family. It depends on Mg(2+) as a cofactor.

Its function is as follows. Necessary for normal cell division and for the maintenance of normal septation. The chain is Probable GTP-binding protein EngB from Acinetobacter baylyi (strain ATCC 33305 / BD413 / ADP1).